Here is a 416-residue protein sequence, read N- to C-terminus: Gamma-glutamyl phosphate reductase (416 aa).

It belongs to the gamma-glutamyl phosphate reductase family.

It localises to the cytoplasm. The catalysed reaction is L-glutamate 5-semialdehyde + phosphate + NADP(+) = L-glutamyl 5-phosphate + NADPH + H(+). It participates in amino-acid biosynthesis; L-proline biosynthesis; L-glutamate 5-semialdehyde from L-glutamate: step 2/2. Its function is as follows. Catalyzes the NADPH-dependent reduction of L-glutamate 5-phosphate into L-glutamate 5-semialdehyde and phosphate. The product spontaneously undergoes cyclization to form 1-pyrroline-5-carboxylate. This Streptococcus pyogenes serotype M3 (strain ATCC BAA-595 / MGAS315) protein is Gamma-glutamyl phosphate reductase.